The chain runs to 367 residues: Beta sliding clamp (367 aa).

It belongs to the beta sliding clamp family. Forms a ring-shaped head-to-tail homodimer around DNA which binds and tethers DNA polymerases and other proteins to the DNA. The DNA replisome complex has a single clamp-loading complex (3 tau and 1 each of delta, delta', psi and chi subunits) which binds 3 Pol III cores (1 core on the leading strand and 2 on the lagging strand) each with a beta sliding clamp dimer. Additional proteins in the replisome are other copies of gamma, psi and chi, Ssb, DNA helicase and RNA primase.

Its subcellular location is the cytoplasm. Its function is as follows. Confers DNA tethering and processivity to DNA polymerases and other proteins. Acts as a clamp, forming a ring around DNA (a reaction catalyzed by the clamp-loading complex) which diffuses in an ATP-independent manner freely and bidirectionally along dsDNA. Initially characterized for its ability to contact the catalytic subunit of DNA polymerase III (Pol III), a complex, multichain enzyme responsible for most of the replicative synthesis in bacteria; Pol III exhibits 3'-5' exonuclease proofreading activity. The beta chain is required for initiation of replication as well as for processivity of DNA replication. The chain is Beta sliding clamp (dnaN) from Pseudomonas aeruginosa (strain ATCC 15692 / DSM 22644 / CIP 104116 / JCM 14847 / LMG 12228 / 1C / PRS 101 / PAO1).